A 495-amino-acid polypeptide reads, in one-letter code: UPF0371 protein cgR_2887 (495 aa).

Belongs to the UPF0371 family.

This chain is UPF0371 protein cgR_2887, found in Corynebacterium glutamicum (strain R).